A 93-amino-acid polypeptide reads, in one-letter code: Small ribosomal subunit protein uS19c (93 aa).

Belongs to the universal ribosomal protein uS19 family.

It is found in the plastid. The protein resides in the chloroplast. Protein S19 forms a complex with S13 that binds strongly to the 16S ribosomal RNA. This is Small ribosomal subunit protein uS19c from Brachypodium distachyon (Purple false brome).